A 1020-amino-acid polypeptide reads, in one-letter code: Sodium/potassium-transporting ATPase subunit alpha-2 (1020 aa).

Positions 1 to 5 (MGRGA) are excised as a propeptide. Positions 1-31 (MGRGAGREYSPAATTAENGGGKKKQKEKELD) are disordered. Residues 6-85 (GREYSPAATT…NALTPPPTTP (80 aa)) are Cytoplasmic-facing. At Ser10 the chain carries Phosphoserine. The interval 80 to 82 (PPP) is interaction with phosphoinositide-3 kinase. Residues 86–106 (EWVKFCRQLFGGFSILLWIGA) traverse the membrane as a helical segment. Residues 107-129 (ILCFLAFGIQAAMEDEPSNDNLY) are Extracellular-facing. The helical transmembrane segment at 130-150 (LGVVLAAVVIVTGCFSYYQEA) threads the bilayer. Residues 151-286 (KSSKIMDSFK…VGRTPIAMEI (136 aa)) lie on the Cytoplasmic side of the membrane. Residues 212–227 (DNSSLTGESEPQTRSP) are compositionally biased toward polar residues. The interval 212 to 231 (DNSSLTGESEPQTRSPEFTH) is disordered. Residues 287–306 (EHFIQLITGVAVFLGVSFFV) form a helical membrane-spanning segment. Residues 307–318 (LSLILGYSWLEA) are Extracellular-facing. A helical membrane pass occupies residues 319–336 (VIFLIGIIVANVPEGLLA). The Cytoplasmic segment spans residues 337–769 (TVTVCLTLTA…EEGRLIFDNL (433 aa)). Residue Asp374 is the 4-aspartylphosphate intermediate of the active site. Phosphoserine is present on residues Ser439, Ser450, Ser496, and Ser559. Thr570 is subject to Phosphothreonine. Phosphoserine is present on residues Ser587 and Ser672. Mg(2+) is bound by residues Asp714 and Asp718. Residues 770-789 (KKSIAYTLTSNIPEITPFLL) form a helical membrane-spanning segment. At 790–799 (FIIANIPLPL) the chain is on the extracellular side. A helical membrane pass occupies residues 800-820 (GTVTILCIDLGTDMVPAISLA). Over 821-840 (YEAAESDIMKRQPRNPQTDK) the chain is Cytoplasmic. Ser826 carries the phosphoserine modification. A helical membrane pass occupies residues 841-863 (LVNERLISMAYGQIGMIQALGGF). The Extracellular segment spans residues 864 to 915 (FTYFVILAENGFLPSRLLGIRLDWDDRSMNDLEDSYGQEWTYEQRKVVEFTC). Residues 916-935 (HTAFFASIVVVQWADLIICK) form a helical membrane-spanning segment. The Cytoplasmic portion of the chain corresponds to 936-948 (TRRNSVFQQGMKN). At Ser940 the chain carries Phosphoserine; by PKA. The chain crosses the membrane as a helical span at residues 949 to 967 (KILIFGLLEETALAAFLSY). Over 968–982 (CPGMGVALRMYPLKV) the chain is Extracellular. The chain crosses the membrane as a helical span at residues 983-1003 (TWWFCAFPYSLLIFIYDEVRK). The Cytoplasmic segment spans residues 1004–1020 (LILRRYPGGWVEKETYY).

Belongs to the cation transport ATPase (P-type) (TC 3.A.3) family. Type IIC subfamily. In terms of assembly, the sodium/potassium-transporting ATPase is composed of a catalytic alpha subunit, an auxiliary non-catalytic beta subunit and an additional regulatory subunit. Interacts with regulatory subunit FXYD1.

It localises to the membrane. The protein resides in the cell membrane. The enzyme catalyses K(+)(out) + Na(+)(in) + ATP + H2O = K(+)(in) + Na(+)(out) + ADP + phosphate + H(+). Its function is as follows. This is the catalytic component of the active enzyme, which catalyzes the hydrolysis of ATP coupled with the exchange of sodium and potassium ions across the plasma membrane. This action creates the electrochemical gradient of sodium and potassium, providing the energy for active transport of various nutrients. This chain is Sodium/potassium-transporting ATPase subunit alpha-2 (ATP1A2), found in Bos taurus (Bovine).